The sequence spans 484 residues: tRNA sulfurtransferase (484 aa).

The region spanning 63–167 (DVFADRLACI…QDKLYMVERR (105 aa)) is the THUMP domain. Residues 185–186 (LI), Lys-267, Gly-289, and Gln-298 each bind ATP. A disulfide bridge links Cys-346 with Cys-458. Positions 406–484 (VASGEIIIDV…GYTNVKVYRP (79 aa)) constitute a Rhodanese domain. Catalysis depends on Cys-458, which acts as the Cysteine persulfide intermediate.

The protein belongs to the ThiI family.

Its subcellular location is the cytoplasm. It carries out the reaction [ThiI sulfur-carrier protein]-S-sulfanyl-L-cysteine + a uridine in tRNA + 2 reduced [2Fe-2S]-[ferredoxin] + ATP + H(+) = [ThiI sulfur-carrier protein]-L-cysteine + a 4-thiouridine in tRNA + 2 oxidized [2Fe-2S]-[ferredoxin] + AMP + diphosphate. The catalysed reaction is [ThiS sulfur-carrier protein]-C-terminal Gly-Gly-AMP + S-sulfanyl-L-cysteinyl-[cysteine desulfurase] + AH2 = [ThiS sulfur-carrier protein]-C-terminal-Gly-aminoethanethioate + L-cysteinyl-[cysteine desulfurase] + A + AMP + 2 H(+). Its pathway is cofactor biosynthesis; thiamine diphosphate biosynthesis. Catalyzes the ATP-dependent transfer of a sulfur to tRNA to produce 4-thiouridine in position 8 of tRNAs, which functions as a near-UV photosensor. Also catalyzes the transfer of sulfur to the sulfur carrier protein ThiS, forming ThiS-thiocarboxylate. This is a step in the synthesis of thiazole, in the thiamine biosynthesis pathway. The sulfur is donated as persulfide by IscS. The protein is tRNA sulfurtransferase of Shewanella frigidimarina (strain NCIMB 400).